We begin with the raw amino-acid sequence, 631 residues long: tRNA uridine 5-carboxymethylaminomethyl modification enzyme MnmG (631 aa).

Residues 15 to 20 (GAGHAG), Ile-127, and Ser-182 each bind FAD. 276–290 (GPRYCPSIEDKIVRF) contributes to the NAD(+) binding site. An FAD-binding site is contributed by Gln-373.

The protein belongs to the MnmG family. Homodimer. Heterotetramer of two MnmE and two MnmG subunits. The cofactor is FAD.

It localises to the cytoplasm. NAD-binding protein involved in the addition of a carboxymethylaminomethyl (cmnm) group at the wobble position (U34) of certain tRNAs, forming tRNA-cmnm(5)s(2)U34. This Streptococcus mutans serotype c (strain ATCC 700610 / UA159) protein is tRNA uridine 5-carboxymethylaminomethyl modification enzyme MnmG.